The following is a 310-amino-acid chain: MGRAPCCDKANVKKGPWSPEEDAKLKSYIENSGTGGNWIALPQKIGLKRCGKSCRLRWLNYLRPNIKHGGFSEEEENIICSLYLTIGSRWSIIAAQLPGRTDNDIKNYWNTRLKKKLINKQRKELQEACMEQQEMMVMMKRQHQQQQIQTSFMMRQDQTMFTWPLHHHNVQVPALFMNQTNSFCDQEDVKPVLIKNMVKIEDQELEKTNPHHHQDSMTNAFDHLSFSQLLLDPNHNHLGSGEGFSMNSILSANTNSPLLNTSNDNQWFGNFQAETVNLFSGASTSTSADQSTISWEDISSLVYSDSKQFF.

HTH myb-type domains lie at 9-62 (KANV…LNYL) and 63-117 (RPNI…KKKL). DNA-binding regions (H-T-H motif) lie at residues 38–62 (WIAL…LNYL) and 90–113 (WSII…NTRL).

In terms of tissue distribution, ubiquitous.

It is found in the nucleus. Functionally, transcription activator. Positively regulates axillary meristems (AMs) formation and development, especially during inflorescence. This Arabidopsis thaliana (Mouse-ear cress) protein is Transcription factor RAX3 (RAX3).